An 880-amino-acid chain; its full sequence is Leucine--tRNA ligase (880 aa).

The 'HIGH' region signature appears at 46-56; that stretch reads PYPSGALHMGH. The 'KMSKS' region signature appears at 638-642; that stretch reads KMSKS. ATP is bound at residue Lys-641.

Belongs to the class-I aminoacyl-tRNA synthetase family.

The protein localises to the cytoplasm. It carries out the reaction tRNA(Leu) + L-leucine + ATP = L-leucyl-tRNA(Leu) + AMP + diphosphate. This Stenotrophomonas maltophilia (strain R551-3) protein is Leucine--tRNA ligase.